Consider the following 577-residue polypeptide: Isocitrate dehydrogenase kinase/phosphatase (577 aa).

ATP-binding positions include 324–330 (APGIRGL) and Lys345. Asp380 is an active-site residue.

The protein belongs to the AceK family.

Its subcellular location is the cytoplasm. The catalysed reaction is L-seryl-[isocitrate dehydrogenase] + ATP = O-phospho-L-seryl-[isocitrate dehydrogenase] + ADP + H(+). In terms of biological role, bifunctional enzyme which can phosphorylate or dephosphorylate isocitrate dehydrogenase (IDH) on a specific serine residue. This is a regulatory mechanism which enables bacteria to bypass the Krebs cycle via the glyoxylate shunt in response to the source of carbon. When bacteria are grown on glucose, IDH is fully active and unphosphorylated, but when grown on acetate or ethanol, the activity of IDH declines drastically concomitant with its phosphorylation. This is Isocitrate dehydrogenase kinase/phosphatase from Pseudoalteromonas atlantica (strain T6c / ATCC BAA-1087).